The following is a 599-amino-acid chain: Putative ATP-dependent helicase YeeB (599 aa).

The Helicase ATP-binding domain occupies 30-207 (AFEKRNSQYL…LLPEDEELFD (178 aa)). 43–50 (APPASGKS) serves as a coordination point for ATP. Residues 154-157 (DEFH) carry the DEAH box motif. The Helicase C-terminal domain occupies 236 to 408 (QYTSAINEVL…TVNTMLKAIS (173 aa)).

This sequence belongs to the helicase family.

This Bacillus subtilis (strain 168) protein is Putative ATP-dependent helicase YeeB (yeeB).